Consider the following 299-residue polypeptide: Nucleotide-binding protein SCO1952 (299 aa).

G23 to S30 serves as a coordination point for ATP. Position 74-77 (D74–G77) interacts with GTP.

This sequence belongs to the RapZ-like family.

Its function is as follows. Displays ATPase and GTPase activities. This chain is Nucleotide-binding protein SCO1952, found in Streptomyces coelicolor (strain ATCC BAA-471 / A3(2) / M145).